We begin with the raw amino-acid sequence, 385 residues long: UPF0764 protein C16orf89 homolog (385 aa).

The signal sequence occupies residues 1–20 (MARLGLLLLLLLALPPHFSS). The tract at residues 344 to 385 (AHPEYYPNHGDPYSSSQSPASNYQDGAAGPDVQRTGRPLSVS) is disordered. A compositionally biased stretch (polar residues) spans 356 to 367 (YSSSQSPASNYQ).

It belongs to the UPF0764 family. Homodimer. Glycosylated. As to expression, predominantly expressed in thyroid tissue.

The protein resides in the secreted. The chain is UPF0764 protein C16orf89 homolog from Mus musculus (Mouse).